We begin with the raw amino-acid sequence, 240 residues long: Urease accessory protein UreF (240 aa).

It belongs to the UreF family. As to quaternary structure, ureD, UreF and UreG form a complex that acts as a GTP-hydrolysis-dependent molecular chaperone, activating the urease apoprotein by helping to assemble the nickel containing metallocenter of UreC. The UreE protein probably delivers the nickel.

It localises to the cytoplasm. Functionally, required for maturation of urease via the functional incorporation of the urease nickel metallocenter. This Bradyrhizobium sp. (strain BTAi1 / ATCC BAA-1182) protein is Urease accessory protein UreF.